Consider the following 491-residue polypeptide: Trigger factor (491 aa).

The PPIase FKBP-type domain occupies 169–254 (GDRVTIDYLG…VKDVAAAAPI (86 aa)). Positions 434–491 (KVSKEELTAEDDADEKPAKKTASKKKAAAKADAAEGEEAAAPKRKAPAKKKASDESAE) are disordered. Positions 452–461 (KKTASKKKAA) are enriched in basic residues.

The protein belongs to the FKBP-type PPIase family. Tig subfamily.

The protein localises to the cytoplasm. It carries out the reaction [protein]-peptidylproline (omega=180) = [protein]-peptidylproline (omega=0). Its function is as follows. Involved in protein export. Acts as a chaperone by maintaining the newly synthesized protein in an open conformation. Functions as a peptidyl-prolyl cis-trans isomerase. This is Trigger factor from Sinorhizobium medicae (strain WSM419) (Ensifer medicae).